We begin with the raw amino-acid sequence, 163 residues long: Type VII secretion system protein EsaG (163 aa).

In terms of assembly, interacts with EssD (via C-terminus). Interacts with EssE.

It localises to the cytoplasm. Its function is as follows. Component of the type VII secretion system (Ess). Also acts as part of toxin-antitoxin system. Counteracts the toxic effect of EssD via direct interaction. This Staphylococcus aureus (strain NCTC 8325 / PS 47) protein is Type VII secretion system protein EsaG.